A 338-amino-acid chain; its full sequence is Inositol 2-dehydrogenase 4 (338 aa).

Belongs to the Gfo/Idh/MocA family. Homotetramer.

It carries out the reaction myo-inositol + NAD(+) = scyllo-inosose + NADH + H(+). Functionally, involved in the oxidation of myo-inositol (MI) to 2-keto-myo-inositol (2KMI or 2-inosose). This Saccharopolyspora erythraea (strain ATCC 11635 / DSM 40517 / JCM 4748 / NBRC 13426 / NCIMB 8594 / NRRL 2338) protein is Inositol 2-dehydrogenase 4.